The primary structure comprises 81 residues: Sec-independent protein translocase protein TatA (81 aa).

The helical transmembrane segment at 1-21 (MGSLSLWHWIIVGAVLLLLFG) threads the bilayer. Positions 41–81 (KKGLSEDDEKPEAARPAEPARSLDHQPVAEQPKVSETHRIG) are disordered.

It belongs to the TatA/E family. In terms of assembly, the Tat system comprises two distinct complexes: a TatABC complex, containing multiple copies of TatA, TatB and TatC subunits, and a separate TatA complex, containing only TatA subunits. Substrates initially bind to the TatABC complex, which probably triggers association of the separate TatA complex to form the active translocon.

Its subcellular location is the cell inner membrane. Functionally, part of the twin-arginine translocation (Tat) system that transports large folded proteins containing a characteristic twin-arginine motif in their signal peptide across membranes. TatA could form the protein-conducting channel of the Tat system. The chain is Sec-independent protein translocase protein TatA from Beijerinckia indica subsp. indica (strain ATCC 9039 / DSM 1715 / NCIMB 8712).